A 1880-amino-acid polypeptide reads, in one-letter code: Nonribosomal peptide synthetase otaB (1880 aa).

Residues 205 to 594 are adenylation 1; that stretch reads AQAVERGNSI…SVSFVGRRQA (390 aa). The Carrier domain occupies 728–804; sequence LPLSPLERQI…ELGAHLEQEA (77 aa). Ser765 carries the O-(pantetheine 4'-phosphoryl)serine modification. The condensation stretch occupies residues 840-1250; sequence EDVYPCTALQ…LLSPQDQQQL (411 aa). The tract at residues 1269-1665 is adenylation 2; that stretch reads QRQCLAHPQK…GRKDRQVKLR (397 aa).

This sequence belongs to the NRP synthetase family.

The catalysed reaction is 7-carboxymellein + L-phenylalanine + ATP = ochratoxin B + ADP + phosphate + H(+). It participates in mycotoxin biosynthesis. Functionally, nonribosomal peptide synthetase; part of the gene cluster that mediates the biosynthesis of ochratoxin A (OTA), a mycotoxin composed of a chlorinated type I polyketide dihydroisocoumarin moiety linked to L-phenylalanine, and demonstrated to have nephrotoxic, immunotoxic, genotoxic, neurotoxic, and teratogenic properties. OtaB is responsible for the linking of phenylalanine to the dihydroisocoumarin ring. The pathway begins with the highly reducing polyketide synthase otaA that catalyzes the formation of the isocoumarin group during the initial stages of biosynthesis, starting from one acetate and 4 malonate units, to originate the characteristic pentaketide skeleton 7-methylmellein (7-MM) of the OTA molecule. The newly identified cyclase otaY might be involved in the polyketide cyclization reaction during the initial steps of the OTA biosynthesis. 7-MM is then oxidized into 7-carboxymellein (also called ochratoxin beta) by the cytochrome P450 monooxygenase otaC. The NRPS encoded by the otaB gene is involved in the linking of phenylalanine to the dihydroisocoumarin ring. The reaction catalyzed by NRPS results in the production of ochratoxin B (OTB), which is the non-chlorinated analog of OTA and which subsequently serves as the substrate of the halogenase otaD for chlorination activity to form the final molecular structure of OTA, containing a chlorine atom in the C-5 position of the molecule. This Aspergillus niger (strain ATCC MYA-4892 / CBS 513.88 / FGSC A1513) protein is Nonribosomal peptide synthetase otaB.